Consider the following 55-residue polypeptide: Large ribosomal subunit protein bL33A (55 aa).

It belongs to the bacterial ribosomal protein bL33 family.

This chain is Large ribosomal subunit protein bL33A, found in Mycobacterium ulcerans (strain Agy99).